We begin with the raw amino-acid sequence, 323 residues long: Protoheme IX farnesyltransferase (323 aa).

8 helical membrane passes run Ile-50–Phe-70, Asn-97–Leu-117, Leu-118–Val-138, Asn-150–Val-170, Ala-184–Met-204, Ile-231–Ala-248, Ile-252–Gly-274, and Tyr-293–Gly-313.

It belongs to the UbiA prenyltransferase family. Protoheme IX farnesyltransferase subfamily.

It localises to the cell membrane. It carries out the reaction heme b + (2E,6E)-farnesyl diphosphate + H2O = Fe(II)-heme o + diphosphate. It functions in the pathway porphyrin-containing compound metabolism; heme O biosynthesis; heme O from protoheme: step 1/1. Its function is as follows. Converts heme B (protoheme IX) to heme O by substitution of the vinyl group on carbon 2 of heme B porphyrin ring with a hydroxyethyl farnesyl side group. In Corynebacterium glutamicum (strain R), this protein is Protoheme IX farnesyltransferase.